Reading from the N-terminus, the 323-residue chain is CTD kinase subunit beta (323 aa).

Belongs to the cyclin family. CTDK-I consists of three subunits, CTK1, CTK2 and CTK3 (also called alpha, beta and gamma). Interacts with CTK1. Heterodimerization with CTK3 is required to protect this subunit from degradation. Phosphorylated. Ubiquitinated. Phosphorylation and ubiquitination lead to degradation in growth-related way by the ubiquitin-proteasome pathway. Neither phosphorylation nor degradation requires association with CTK1.

The protein localises to the nucleus. Its subcellular location is the nucleolus. Its function is as follows. Cyclin subunit of the CTDK-I complex, which hyperphosphorylates the C-terminal heptapeptide repeat domain (CTD) of the largest RNA polymerase II subunit. CTDK-I phosphorylates 'Ser-5' if the CTD substrate is not phosphorylated at 'Ser-5', but will phosphorylate 'Ser-2' of a CTD substrate if 'Ser-5' is already phosphorylated. CTDK-I is also more reactive toward substrates that are prephosphorylated at 'Ser-2' or 'Ser-5' compared with an unphosphorylated CTD substrate, therefore efficiently creating doubly phosphorylated CTD repeats. Involved in RNA polymerase II transcriptional elongation, and as part of the CTDK-I complex, pre-mRNA 3'-end processing and SET2 mediated H3K36 methylation. Together with CTK3, required for CTK1 CTD kinase activation. Required for DNA damage induced transcription. Involved in the adaptation to alternative carbon sources, including galactose, glycerol and ethanol, but not raffinose. Required for the integrity of the rDNA locus. The protein is CTD kinase subunit beta (CTK2) of Saccharomyces cerevisiae (strain ATCC 204508 / S288c) (Baker's yeast).